The chain runs to 306 residues: Palmitoyl-protein thioesterase 1 (306 aa).

Residues 1–27 (MASPSCLWLLAVALLPWTCAARALHHL) form the signal peptide. Disulfide bonds link Cys45/Cys46, Cys96/Cys128, and Cys152/Cys160. Ser115 is an active-site residue. Asn197, Asn212, and Asn232 each carry an N-linked (GlcNAc...) asparagine glycan. Active-site residues include Asp233 and His289.

The protein belongs to the palmitoyl-protein thioesterase family. As to quaternary structure, interacts with CLN5, ATP5F1A and ATP5F1B. Post-translationally, glycosylated.

The protein resides in the lysosome. It localises to the secreted. The protein localises to the golgi apparatus. Its subcellular location is the endoplasmic reticulum. The catalysed reaction is S-hexadecanoyl-L-cysteinyl-[protein] + H2O = L-cysteinyl-[protein] + hexadecanoate + H(+). It catalyses the reaction hexadecanoyl-CoA + H2O = hexadecanoate + CoA + H(+). The enzyme catalyses S-hexadecanoyl-N-acetylcysteamine + H2O = N-acetylcysteamine + hexadecanoate + H(+). It carries out the reaction S-hexadecanoyl-N-acetylcysteine methyl ester + H2O = N-acetylcysteine methyl ester + hexadecanoate + H(+). Its activity is regulated as follows. Palmitoylation reduces PPT1 enzymatic activity. Has thioesterase activity against fatty acid thioesters with 14 -18 carbons, including palmitoyl-CoA, S-palmitoyl-N-acetylcysteamine, and palmitoylated proteins. In contrast to PPT2, PPT1 can hydrolyze palmitoylated proteins and palmitoylcysteine. The chain is Palmitoyl-protein thioesterase 1 (PPT1) from Macaca fascicularis (Crab-eating macaque).